The chain runs to 373 residues: Indole glucosinolate O-methyltransferase 1 (373 aa).

S-adenosyl-L-homocysteine-binding residues include glycine 217, aspartate 240, aspartate 260, methionine 261, and lysine 274. Histidine 278 serves as the catalytic Proton acceptor.

Belongs to the class I-like SAM-binding methyltransferase superfamily. Cation-independent O-methyltransferase family. In terms of assembly, interacts with B'GAMMA.

It participates in secondary metabolite biosynthesis. Involved in indole glucosinolate biosynthesis. Catalyzes methoxylation reactions of the glucosinolate indole ring. Converts the hydroxy intermediates 4-hydroxy-indol-3-yl-methylglucosinolate (4OH-I3M) and 1-hydroxy-indol-3-yl-methylglucosinolate (1OH-I3M) to 4-methoxy-indol-3-yl-methylglucosinolate (4MO-I3M) and 1-methoxy-indol-3-yl-methylglucosinolate (1MO-I3M), respectively. The polypeptide is Indole glucosinolate O-methyltransferase 1 (Arabidopsis thaliana (Mouse-ear cress)).